The following is a 343-amino-acid chain: D-alanine--D-alanine ligase (343 aa).

Residues 129–335 (KYVLEHFNIK…YSKLIDELIE (207 aa)) form the ATP-grasp domain. 162 to 217 (ENKLGYAVFIKPSNSGSSVGITKAHNRKELEAGLEEAMKYDRKILVEEALNAREIE) lines the ATP pocket. Mg(2+) is bound by residues Asp288, Glu302, and Asn304.

It belongs to the D-alanine--D-alanine ligase family. It depends on Mg(2+) as a cofactor. Mn(2+) serves as cofactor.

It localises to the cytoplasm. The catalysed reaction is 2 D-alanine + ATP = D-alanyl-D-alanine + ADP + phosphate + H(+). The protein operates within cell wall biogenesis; peptidoglycan biosynthesis. In terms of biological role, cell wall formation. This Clostridium acetobutylicum (strain ATCC 824 / DSM 792 / JCM 1419 / IAM 19013 / LMG 5710 / NBRC 13948 / NRRL B-527 / VKM B-1787 / 2291 / W) protein is D-alanine--D-alanine ligase.